The following is a 201-amino-acid chain: Dephospho-CoA kinase (201 aa).

The region spanning 6 to 201 (VMGLTGSIGM…RAIREKNPRG (196 aa)) is the DPCK domain. Residue 14–19 (GMGKSA) coordinates ATP.

This sequence belongs to the CoaE family.

It is found in the cytoplasm. It carries out the reaction 3'-dephospho-CoA + ATP = ADP + CoA + H(+). It functions in the pathway cofactor biosynthesis; coenzyme A biosynthesis; CoA from (R)-pantothenate: step 5/5. Its function is as follows. Catalyzes the phosphorylation of the 3'-hydroxyl group of dephosphocoenzyme A to form coenzyme A. This Novosphingobium aromaticivorans (strain ATCC 700278 / DSM 12444 / CCUG 56034 / CIP 105152 / NBRC 16084 / F199) protein is Dephospho-CoA kinase.